Consider the following 690-residue polypeptide: Ligand of Numb protein X 2 (690 aa).

The RING-type zinc-finger motif lies at 50-88; sequence CHICLQPLLQPLDTPCGHTFCYKCLRNFLQEKDFCPLDR. Positions 198-224 are disordered; that stretch reads STWSEEPGLDNPAFEESAGADTTQQPL. Positions 208 to 211 match the NPXY motif motif; that stretch reads NPAF. 4 consecutive PDZ domains span residues 233-318, 339-422, 468-554, and 600-688; these read TIEI…LRER, QVAL…ARPG, HITV…KALE, and DIVL…WPGS. Residues 418-455 form a disordered region; the sequence is IARPGKPQPGNTIREAGNHSSSSQHHTPPPYYSRPSSH.

In terms of assembly, interacts with the phosphotyrosine interaction domain of NUMB.

This Homo sapiens (Human) protein is Ligand of Numb protein X 2 (LNX2).